A 575-amino-acid chain; its full sequence is Melatonin-related receptor (575 aa).

Residues 1–30 (MGRTLAVPTPYGCIGCKLPQPDYPPALIVF) are Extracellular-facing. Residues 31-51 (MFCAMVITIVVDLIGNSMVIL) form a helical membrane-spanning segment. The Cytoplasmic segment spans residues 52 to 64 (AVSKNKKLRNSGN). A helical transmembrane segment spans residues 65–85 (VFVVSLSVADMLVAIYPYPLM). The Extracellular segment spans residues 86 to 103 (LHAMAIGGWDLSKLQCQM). An intrachain disulfide couples C101 to C178. A helical transmembrane segment spans residues 104-124 (VGFITGLSVVGSIFNIMAIAI). Topologically, residues 125 to 143 (NRYCYICHSLQYERIFSVR) are cytoplasmic. Residues 144-164 (NTCIYLAVTWIMTVLAVLPNM) form a helical membrane-spanning segment. The Extracellular portion of the chain corresponds to 165–188 (YIGTIEYDPRTYTCIFNYVNNPAF). Residues 189–209 (AVTIVCIHFVLPLLIVGFCYV) form a helical membrane-spanning segment. The Cytoplasmic segment spans residues 210-239 (KIWTKVLAARDPAGQNPDNQLAEVRNFLTM). Residues 240 to 260 (FVIFLLFAVCWCPINALTVLV) traverse the membrane as a helical segment. Residues 261-273 (AVNPKEMAGKIPN) are Extracellular-facing. A helical transmembrane segment spans residues 274-294 (WVYLAAYFIAYFNSCLNAVIY). Residues 295 to 575 (GVLNENFRRE…VDADSDEMAV (281 aa)) lie on the Cytoplasmic side of the membrane. Disordered regions lie at residues 368–421 (VPLP…TVYP) and 446–474 (SSHPKPITGPSKTAISPATSFPKPTTGYT). A compositionally biased stretch (polar residues) spans 455–474 (PSKTAISPATSFPKPTTGYT).

It belongs to the G-protein coupled receptor 1 family. In terms of assembly, homodimer, and heterodimer with MTNR1A and MTNR1B. Interacts with KAT5. Interacts with RTN4 isoform A/NOGO-A. Interacts with TGFBR1.

The protein resides in the cell membrane. Its function is as follows. G protein-coupled receptor that plays a role in numerous physiological processes including regulation of energy metabolism, neurite outgrowth or cell migration. Promotes self-renewal and neuronal differentiation of neural progenitor cells through activation of the NOTCH and WNT/beta-catenin signaling pathways. Modulates the KAT5-dependent glucocorticoid receptor signaling by modulating KAT5 subcellular compartmentalisation. Also plays a role in the activation TGFBR1 in the absence of TGFBR2 by interfering with FKBP1A binding to TGFBR1, leading to induction of both canonical and non-canonical SMAD signaling pathways resulting in inhibition of proliferation or promotion of migration. This Ovis aries (Sheep) protein is Melatonin-related receptor (GPR50).